Consider the following 699-residue polypeptide: Elongation factor G (699 aa).

One can recognise a tr-type G domain in the interval 8–283 (EHIRNIGICA…AVVDFLPSPI (276 aa)). GTP contacts are provided by residues 17–24 (AHIDAGKT), 81–85 (DTPGH), and 135–138 (NKMD).

Belongs to the TRAFAC class translation factor GTPase superfamily. Classic translation factor GTPase family. EF-G/EF-2 subfamily.

It localises to the cytoplasm. In terms of biological role, catalyzes the GTP-dependent ribosomal translocation step during translation elongation. During this step, the ribosome changes from the pre-translocational (PRE) to the post-translocational (POST) state as the newly formed A-site-bound peptidyl-tRNA and P-site-bound deacylated tRNA move to the P and E sites, respectively. Catalyzes the coordinated movement of the two tRNA molecules, the mRNA and conformational changes in the ribosome. The sequence is that of Elongation factor G from Rickettsia africae (strain ESF-5).